Consider the following 428-residue polypeptide: Adenylosuccinate synthetase (428 aa).

GTP is bound by residues 12 to 18 (GDEGKGK) and 40 to 42 (GHT). Aspartate 13 acts as the Proton acceptor in catalysis. Positions 13 and 40 each coordinate Mg(2+). IMP is bound by residues 13–16 (DEGK), 38–41 (NAGH), threonine 128, arginine 142, glutamine 223, threonine 238, and arginine 302. Histidine 41 (proton donor) is an active-site residue. Residue 298–304 (VTTGRPR) coordinates substrate. GTP-binding positions include arginine 304, 330–332 (KLD), and 413–415 (GVG).

It belongs to the adenylosuccinate synthetase family. In terms of assembly, homodimer. The cofactor is Mg(2+).

The protein localises to the cytoplasm. It catalyses the reaction IMP + L-aspartate + GTP = N(6)-(1,2-dicarboxyethyl)-AMP + GDP + phosphate + 2 H(+). It functions in the pathway purine metabolism; AMP biosynthesis via de novo pathway; AMP from IMP: step 1/2. Plays an important role in the de novo pathway of purine nucleotide biosynthesis. Catalyzes the first committed step in the biosynthesis of AMP from IMP. The polypeptide is Adenylosuccinate synthetase (Acidothermus cellulolyticus (strain ATCC 43068 / DSM 8971 / 11B)).